A 217-amino-acid chain; its full sequence is Serine acetyltransferase (217 aa).

The protein belongs to the transferase hexapeptide repeat family.

It is found in the cytoplasm. It catalyses the reaction L-serine + acetyl-CoA = O-acetyl-L-serine + CoA. It functions in the pathway amino-acid biosynthesis; L-cysteine biosynthesis; L-cysteine from L-serine: step 1/2. Inhibited by cysteine. Catalyzes the acetylation of serine by acetyl-CoA to produce O-acetylserine (OAS). The chain is Serine acetyltransferase from Bacillus pumilus (strain SAFR-032).